The chain runs to 389 residues: S-adenosylmethionine synthase (389 aa).

H16 provides a ligand contact to ATP. Residue D18 coordinates Mg(2+). E44 provides a ligand contact to K(+). The L-methionine site is built by E57 and Q101. A flexible loop region spans residues 101-111 (QSVDIAQGVNE). ATP is bound by residues 168 to 170 (DAK), 234 to 235 (RF), D243, 249 to 250 (RK), A266, and K270. D243 is an L-methionine binding site. K274 contacts L-methionine.

It belongs to the AdoMet synthase family. In terms of assembly, homotetramer; dimer of dimers. Requires Mg(2+) as cofactor. The cofactor is K(+).

The protein localises to the cytoplasm. The enzyme catalyses L-methionine + ATP + H2O = S-adenosyl-L-methionine + phosphate + diphosphate. It functions in the pathway amino-acid biosynthesis; S-adenosyl-L-methionine biosynthesis; S-adenosyl-L-methionine from L-methionine: step 1/1. Functionally, catalyzes the formation of S-adenosylmethionine (AdoMet) from methionine and ATP. The overall synthetic reaction is composed of two sequential steps, AdoMet formation and the subsequent tripolyphosphate hydrolysis which occurs prior to release of AdoMet from the enzyme. The protein is S-adenosylmethionine synthase of Magnetococcus marinus (strain ATCC BAA-1437 / JCM 17883 / MC-1).